Reading from the N-terminus, the 212-residue chain is Maleylpyruvate isomerase (212 aa).

One can recognise a GST N-terminal domain in the interval 1–80 (MKLYNFWRSG…WLEEQYPTPA (80 aa)). Residues 9–11 (SGT), His38, Val52, 64–65 (QS), 102–104 (DIH), 108–110 (NRR), and Arg176 each bind glutathione. A GST C-terminal domain is found at 85-212 (DADGRQRVRA…AAPAAQPDSA (128 aa)).

It belongs to the GST superfamily. Zeta family. Homodimer. It depends on glutathione as a cofactor.

It carries out the reaction 3-maleylpyruvate = 3-fumarylpyruvate. It functions in the pathway aromatic compound metabolism; naphthalene degradation. Its function is as follows. Catalyzes the GSH-dependent isomerization of maleylpyruvate to fumarylpyruvate which is subsequently processed by NagK to form pyruvate and fumarate. This is Maleylpyruvate isomerase from Ralstonia sp.